The following is a 138-amino-acid chain: Cell division protein SepF (138 aa).

This sequence belongs to the SepF family. Homodimer. Interacts with FtsZ.

Its subcellular location is the cytoplasm. Its function is as follows. Cell division protein that is part of the divisome complex and is recruited early to the Z-ring. Probably stimulates Z-ring formation, perhaps through the cross-linking of FtsZ protofilaments. Its function overlaps with FtsA. The protein is Cell division protein SepF of Limosilactobacillus reuteri (strain DSM 20016) (Lactobacillus reuteri).